The sequence spans 299 residues: 4-diphosphocytidyl-2-C-methyl-D-erythritol kinase (299 aa).

The active site involves K16. 97–107 (PVASGIGGGSA) serves as a coordination point for ATP. D140 is an active-site residue.

Belongs to the GHMP kinase family. IspE subfamily.

It carries out the reaction 4-CDP-2-C-methyl-D-erythritol + ATP = 4-CDP-2-C-methyl-D-erythritol 2-phosphate + ADP + H(+). It functions in the pathway isoprenoid biosynthesis; isopentenyl diphosphate biosynthesis via DXP pathway; isopentenyl diphosphate from 1-deoxy-D-xylulose 5-phosphate: step 3/6. In terms of biological role, catalyzes the phosphorylation of the position 2 hydroxy group of 4-diphosphocytidyl-2C-methyl-D-erythritol. The sequence is that of 4-diphosphocytidyl-2-C-methyl-D-erythritol kinase from Roseobacter denitrificans (strain ATCC 33942 / OCh 114) (Erythrobacter sp. (strain OCh 114)).